A 207-amino-acid polypeptide reads, in one-letter code: Glutathione S-transferase 3 (207 aa).

The 78-residue stretch at V2 to G79 folds into the GST N-terminal domain. Residues Y8, K43, G49–V51, and Q63–S64 each bind glutathione. A GST C-terminal domain is found at T81 to F207.

Belongs to the GST superfamily. Sigma family.

The catalysed reaction is RX + glutathione = an S-substituted glutathione + a halide anion + H(+). Its function is as follows. Conjugation of reduced glutathione to a wide number of exogenous and endogenous hydrophobic electrophiles. The polypeptide is Glutathione S-transferase 3 (gst-3) (Caenorhabditis elegans).